The following is a 517-amino-acid chain: GMP synthase [glutamine-hydrolyzing] (517 aa).

Residues 11-202 (KIIVLDYGSQ…AFGVCGAQDN (192 aa)) enclose the Glutamine amidotransferase type-1 domain. The Nucleophile role is filled by C88. Residues H176 and E178 contribute to the active site. Positions 203-392 (WTMNDFIDMQ…LGMPYELVWR (190 aa)) constitute a GMPS ATP-PPase domain. 230 to 236 (SGGVDSS) contacts ATP.

Homodimer.

It catalyses the reaction XMP + L-glutamine + ATP + H2O = GMP + L-glutamate + AMP + diphosphate + 2 H(+). It participates in purine metabolism; GMP biosynthesis; GMP from XMP (L-Gln route): step 1/1. Its function is as follows. Catalyzes the synthesis of GMP from XMP. The sequence is that of GMP synthase [glutamine-hydrolyzing] from Latilactobacillus sakei subsp. sakei (strain 23K) (Lactobacillus sakei subsp. sakei).